A 917-amino-acid polypeptide reads, in one-letter code: MATDSLGTLTVDLIANTGGFERGMDAAERRIASTTRAFQRQEQAAERLVGRIDPVAGAINRLVQEQTELERHFRSGIIPAGEFERLNRILNDQLDAVQRGNREMASGAMSARQYQAALRGVPAQFTDIAVSLASGQQPLTVLLQQGGQLKDMFGGVVPAARALGGYIAGLVNPITGLAASVGVLGISFIDAEREAAAFNKAIFAGNNAAGVSGSGLSQIAEQASAVAGSLSSANKAAIALASSGKVAASQLQSLTEATIAIAQFTGKEVDDVAKSLSAMGDSATDAAAKISEQYGLLTYEQYQVIKSIDEQGNSQRALDVLGEELNRNAQERLKQYRESLSDIERDWIDIKTAITNSYAAVRSEIFPNQNQQIEQIQRILRTRQEGGVLGAVSSAFGFGENSTESLQQQLDSLVKQRDAAAKQAEEQAKITKSNQDRVDASREWEKENEKYLSSRVKMEKEISAARELGRKAGLNEIEIEDRIAQIRKSYEEKPSSRSGSLDAGQRMLDSLRQQYASMQAQLEATEKLGTQAQALVKWEQQLADLKSRGSLSADQKALLANADLITAQLKRNAALEDELNTRKEIQKTLDDYKRLNESLRTDAEKQLDLTRQRFEILDKARQAGISDDDYRRTAERIVSSSTTKAPTFSGVDAVVAGPQGELDKLDKAQEDLEAWYEQQLEILNENREKRAELNASWDEQELKLKQEHEDAMAAIEQSRQQITLSANEQFFGNLSGLAKTFFGEQSGLYKAAFVAEKSFAIAKTLINVPKTASDAYSAMAGIPVIGPALGIAAAAAAVTAQLAQVAAVKNVNLSGMAHDGIDAVPETGTWLLQKGERVTTAETSAKLDKTLDDVRSNQSGGGAPTINLIEDRSRAGQVNTRRQDDQYIIDVVVADLFGDGRTSKAIGSSFGMRRSGT.

2 coiled-coil regions span residues 501 to 528 and 575 to 602; these read LDAGQRMLDSLRQQYASMQAQLEATEKL and LEDELNTRKEIQKTLDDYKRLNESLRTD. A disordered region spans residues 852–877; the sequence is DDVRSNQSGGGAPTINLIEDRSRAGQ.

Belongs to the Lambdavirus tape measure protein family. Interacts with the tail initiator complex presumably through its C-terminus domain. Interacts with the tail assembly proteins.

Its subcellular location is the virion. Its function is as follows. Serves as a ruler that controls the length of tail by stopping the tail tube polymerization and is probably released from the tail shaft during infection to facilitate DNA translocation into the host cell. Assembles into a multimeric linear form probably arranged as a coil of alpha-helices and stabilized by the covering tail assembly proteins. Its C-terminus fixes the tail tip complex, thereby forming the tail assembly initiator complex. Tail tube proteins polymerize around the tape measure protein, displacing the tail assembly proteins. When the tail reaches the length specified by the tape measure protein, it stops and becomes capped by the tail terminator protein. The polypeptide is Tape measure protein (Pseudomonas phage PAJU2).